Reading from the N-terminus, the 211-residue chain is MLRQSCSFPVTSLPALGGVCGREGAGAEVPPAACGCEGRDPDTERSCGRSSTGGCSPCSGPGPSSPRTSRGALSPSLGRLFPHLQVVIKLRIQLAPAVHLALPTCSLLTSSPPLEGCCHRLNEEAEVQRGFRPIAVELEFENQPLGAETRLRNGRRAGVKRSEGRGQVRPGQVRSTGPEGGLTRMERKAARLQWDSGSIKMSENEQLWEEP.

Disordered stretches follow at residues 45 to 74 and 147 to 211; these read RSCG…GALS and AETR…WEEP. The segment covering 48–71 has biased composition (low complexity); that stretch reads GRSSTGGCSPCSGPGPSSPRTSRG. Polar residues predominate over residues 195 to 205; that stretch reads DSGSIKMSENE.

This is an uncharacterized protein from Homo sapiens (Human).